Here is a 298-residue protein sequence, read N- to C-terminus: Acetyl-coenzyme A carboxylase carboxyl transferase subunit beta (298 aa).

The CoA carboxyltransferase N-terminal domain maps to 25-295 (VWAKCANCGE…SADHREHVVA (271 aa)). Zn(2+) is bound by residues Cys-29, Cys-32, Cys-48, and Cys-51. A C4-type zinc finger spans residues 29 to 51 (CANCGELTYQKQFNDALKVCPKC).

It belongs to the AccD/PCCB family. As to quaternary structure, acetyl-CoA carboxylase is a heterohexamer composed of biotin carboxyl carrier protein (AccB), biotin carboxylase (AccC) and two subunits each of ACCase subunit alpha (AccA) and ACCase subunit beta (AccD). Zn(2+) serves as cofactor.

Its subcellular location is the cytoplasm. The catalysed reaction is N(6)-carboxybiotinyl-L-lysyl-[protein] + acetyl-CoA = N(6)-biotinyl-L-lysyl-[protein] + malonyl-CoA. It participates in lipid metabolism; malonyl-CoA biosynthesis; malonyl-CoA from acetyl-CoA: step 1/1. In terms of biological role, component of the acetyl coenzyme A carboxylase (ACC) complex. Biotin carboxylase (BC) catalyzes the carboxylation of biotin on its carrier protein (BCCP) and then the CO(2) group is transferred by the transcarboxylase to acetyl-CoA to form malonyl-CoA. This chain is Acetyl-coenzyme A carboxylase carboxyl transferase subunit beta, found in Herpetosiphon aurantiacus (strain ATCC 23779 / DSM 785 / 114-95).